Here is a 118-residue protein sequence, read N- to C-terminus: UPF0102 protein Csac_2148 (118 aa).

This sequence belongs to the UPF0102 family.

The sequence is that of UPF0102 protein Csac_2148 from Caldicellulosiruptor saccharolyticus (strain ATCC 43494 / DSM 8903 / Tp8T 6331).